Consider the following 260-residue polypeptide: Triosephosphate isomerase (260 aa).

11–13 lines the substrate pocket; the sequence is NWK. Residue His103 is the Electrophile of the active site. Residue Glu175 is the Proton acceptor of the active site. Substrate is bound by residues Gly181, Ser220, and 241-242; that span reads GG.

Belongs to the triosephosphate isomerase family. As to quaternary structure, homodimer.

It is found in the cytoplasm. The catalysed reaction is D-glyceraldehyde 3-phosphate = dihydroxyacetone phosphate. The protein operates within carbohydrate biosynthesis; gluconeogenesis. It functions in the pathway carbohydrate degradation; glycolysis; D-glyceraldehyde 3-phosphate from glycerone phosphate: step 1/1. Functionally, involved in the gluconeogenesis. Catalyzes stereospecifically the conversion of dihydroxyacetone phosphate (DHAP) to D-glyceraldehyde-3-phosphate (G3P). This Shewanella woodyi (strain ATCC 51908 / MS32) protein is Triosephosphate isomerase.